The chain runs to 1481 residues: Chromosome partition protein MukB (1481 aa).

An ATP-binding site is contributed by 34 to 41; the sequence is GGNGAGKS. Coiled coils occupy residues 338–480, 509–604, 780–805, 835–1116, and 1210–1265; these read SLVQ…QAYQ, QHLA…APVW, RAARENRLEALYQERDSLAERYATLS, EAEI…AKAG, and EAIE…LQAV. The tract at residues 666–783 is flexible hinge; sequence PSGAEDSRMI…EVPLFGRAAR (118 aa).

It belongs to the SMC family. MukB subfamily. Homodimerization via its hinge domain. Binds to DNA via its C-terminal region. Interacts, and probably forms a ternary complex, with MukE and MukF via its C-terminal region. The complex formation is stimulated by calcium or magnesium. Interacts with tubulin-related protein FtsZ.

The protein resides in the cytoplasm. Its subcellular location is the nucleoid. Functionally, plays a central role in chromosome condensation, segregation and cell cycle progression. Functions as a homodimer, which is essential for chromosome partition. Involved in negative DNA supercoiling in vivo, and by this means organize and compact chromosomes. May achieve or facilitate chromosome segregation by condensation DNA from both sides of a centrally located replisome during cell division. This Yersinia enterocolitica serotype O:8 / biotype 1B (strain NCTC 13174 / 8081) protein is Chromosome partition protein MukB.